Here is a 169-residue protein sequence, read N- to C-terminus: Required for excision 1-B domain-containing protein (169 aa).

The chain is Required for excision 1-B domain-containing protein from Mus musculus (Mouse).